The sequence spans 212 residues: Large ribosomal subunit protein uL3 (212 aa).

The segment covering Arg128–Thr146 has biased composition (basic residues). The interval Arg128–Pro164 is disordered.

Belongs to the universal ribosomal protein uL3 family. As to quaternary structure, part of the 50S ribosomal subunit. Forms a cluster with proteins L14 and L19.

In terms of biological role, one of the primary rRNA binding proteins, it binds directly near the 3'-end of the 23S rRNA, where it nucleates assembly of the 50S subunit. The polypeptide is Large ribosomal subunit protein uL3 (Desulfitobacterium hafniense (strain Y51)).